The chain runs to 64 residues: Large ribosomal subunit protein bL35 (64 aa).

A disordered region spans residues Met1–Thr41.

This sequence belongs to the bacterial ribosomal protein bL35 family.

This chain is Large ribosomal subunit protein bL35, found in Nocardia farcinica (strain IFM 10152).